The following is a 406-amino-acid chain: Solute carrier family 22 member 18 (406 aa).

10 helical membrane passes run 8-28 (GIII…FMQF), 43-63 (VSFG…GPVF), 85-105 (ALYL…FLLF), 140-160 (LGLC…TLNT), 168-188 (AILA…CVPA), 226-246 (FLVK…FSII), 258-278 (AGYL…LVIG), 295-315 (LVFA…HFCF), 316-336 (LMPG…SMLT), and 374-394 (GVPI…LVLW).

Belongs to the major facilitator (TC 2.A.1) superfamily. Organic cation transporter (TC 2.A.1.19) family. As to quaternary structure, interacts with RNF167. Expressed at high levels in fetal and adult kidney and liver, and extraembryonic membranes (yolk sac). Expressed at moderate levels in intestine, heart, lung and testis.

It is found in the apical cell membrane. May act as a transporter of organic cations based on a proton efflux antiport mechanism. May play a role in the transport of chloroquine and quinidine-related compounds in kidney. Plays a role in the regulation of lipid metabolism. The chain is Solute carrier family 22 member 18 (Slc67a1) from Mus musculus (Mouse).